Consider the following 456-residue polypeptide: Gamma-glutamyl phosphate reductase (456 aa).

Belongs to the gamma-glutamyl phosphate reductase family.

It localises to the cytoplasm. The enzyme catalyses L-glutamate 5-semialdehyde + phosphate + NADP(+) = L-glutamyl 5-phosphate + NADPH + H(+). Its pathway is amino-acid biosynthesis; L-proline biosynthesis; L-glutamate 5-semialdehyde from L-glutamate: step 2/2. Functionally, catalyzes the NADPH-dependent reduction of L-glutamate 5-phosphate into L-glutamate 5-semialdehyde and phosphate. The product spontaneously undergoes cyclization to form 1-pyrroline-5-carboxylate. The chain is Gamma-glutamyl phosphate reductase from Haloquadratum walsbyi (strain DSM 16790 / HBSQ001).